The chain runs to 97 residues: DNA-directed RNA polymerase subunit omega (97 aa).

This sequence belongs to the RNA polymerase subunit omega family. In terms of assembly, the RNAP catalytic core consists of 2 alpha, 1 beta, 1 beta' and 1 omega subunit. When a sigma factor is associated with the core the holoenzyme is formed, which can initiate transcription.

The catalysed reaction is RNA(n) + a ribonucleoside 5'-triphosphate = RNA(n+1) + diphosphate. In terms of biological role, promotes RNA polymerase assembly. Latches the N- and C-terminal regions of the beta' subunit thereby facilitating its interaction with the beta and alpha subunits. In Corynebacterium glutamicum (strain ATCC 13032 / DSM 20300 / JCM 1318 / BCRC 11384 / CCUG 27702 / LMG 3730 / NBRC 12168 / NCIMB 10025 / NRRL B-2784 / 534), this protein is DNA-directed RNA polymerase subunit omega.